We begin with the raw amino-acid sequence, 62 residues long: High-potential iron-sulfur protein (62 aa).

4 residues coordinate [4Fe-4S] cluster: Cys22, Cys25, Cys40, and Cys55.

Belongs to the high-potential iron-sulfur protein (HiPIP) family. Homodimer.

Its function is as follows. Specific class of high-redox-potential 4Fe-4S ferredoxins. Functions in anaerobic electron transport in most purple and in some other photosynthetic bacteria and in at least one genus (Paracoccus) of halophilic, denitrifying bacteria. The polypeptide is High-potential iron-sulfur protein (hip) (Rhodocyclus tenuis (Rhodospirillum tenue)).